Reading from the N-terminus, the 383-residue chain is NIPA-like protein 2 (383 aa).

Residues N23 and N33 are each glycosylated (N-linked (GlcNAc...) asparagine). Transmembrane regions (helical) follow at residues 46–66 (IHLF…ISLN), 88–108 (VLWW…FAAY), 110–130 (FAPI…SAII), 144–164 (LLGT…APNI), 177–197 (LVGW…CILL), 209–229 (VILL…VKAV), and 243–263 (LTYP…VFQV). A glycan (N-linked (GlcNAc...) asparagine) is linked at N274. A run of 2 helical transmembrane segments spans residues 278-298 (VVPV…IIFY) and 306-326 (FLTV…VFLV). A disordered region spans residues 355–383 (QPDSHSLSYGTLPDGSDSTKSQSGEKKEV).

The protein belongs to the NIPA family.

The protein resides in the membrane. The protein is NIPA-like protein 2 (NIPAL2) of Homo sapiens (Human).